A 168-amino-acid polypeptide reads, in one-letter code: uncharacterized protein (168 aa).

Residues 24-44 form a helical membrane-spanning segment; the sequence is FIGIVLFLAVLIIGILILILF. 2 disordered regions span residues 69-92 and 142-168; these read SPSSSFLINNNNNNNNYHQNNNSN and NNNNNNNNNPPTNISNKLNKNGETKNI. Residues 142-157 show a composition bias toward low complexity; the sequence is NNNNNNNNNPPTNISN.

The protein localises to the membrane. This is an uncharacterized protein from Dictyostelium discoideum (Social amoeba).